The primary structure comprises 932 residues: DNA mismatch repair protein MutS (932 aa).

Over residues 1–13 (MTTDTDTDVDAGT) the composition is skewed to acidic residues. The segment at 1–26 (MTTDTDTDVDAGTDLEPQPEGPPEKM) is disordered. 648-655 (GPNMSGKS) lines the ATP pocket. The segment at 865–892 (NQQNQASDDDEIARSPRGADTNTDAGIN) is disordered.

This sequence belongs to the DNA mismatch repair MutS family.

This protein is involved in the repair of mismatches in DNA. It is possible that it carries out the mismatch recognition step. This protein has a weak ATPase activity. The sequence is that of DNA mismatch repair protein MutS from Haloquadratum walsbyi (strain DSM 16790 / HBSQ001).